We begin with the raw amino-acid sequence, 352 residues long: MDYQVSSPTYDIDYYTSEPCQKINVKQIAARLLPPLYSLVFIFGFVGNILVVLILINCKRLKSMTDIYLLNLAISDLLFLLTVPFWAHYAAAQWDFGNTMCQLLTGLYFIGFFSGIFFIILLTIDRYLAIVHAVFALKARTVTFGVVTSVITWVVAVFASLPGIIFTRSQREGLHYTCSSHFPYSQYQFWKNFQTLKMVILGLVLPLLVMVICYSGILKTLLRCRNEKKRHRAVRLIFTIMIVYFLFWAPYNIVLLLNTFQEFFGLNNCSSSNRLDQAMQVTETLGMTHCCINPIIYAFVGEKFRNYLLVFFQKHIAKRFCKCCSIFQQEAPERASSVYTRSTGEQEISVGL.

Over Met-1 to Ala-30 the chain is Extracellular. Tyr-3 is subject to Sulfotyrosine. Ser-6 and Ser-7 each carry an O-linked (GalNAc...) serine glycan. Sulfotyrosine occurs at positions 10, 14, and 15. 2 disulfide bridges follow: Cys-20–Cys-269 and Cys-101–Cys-178. A helical membrane pass occupies residues Arg-31–Cys-58. Residues Lys-59 to Tyr-68 lie on the Cytoplasmic side of the membrane. A helical transmembrane segment spans residues Leu-69 to Tyr-89. Over Ala-90 to Gln-102 the chain is Extracellular. Residues Leu-103–Ile-124 form a helical membrane-spanning segment. Over Asp-125–Thr-141 the chain is Cytoplasmic. The helical transmembrane segment at Val-142–Phe-166 threads the bilayer. The Extracellular segment spans residues Thr-167–Met-198. A helical transmembrane segment spans residues Val-199–Leu-218. The Cytoplasmic portion of the chain corresponds to Lys-219–Arg-235. Residues Leu-236–Phe-260 traverse the membrane as a helical segment. Over Gln-261–Gln-277 the chain is Extracellular. The chain crosses the membrane as a helical span at residues Ala-278–Gly-301. Residues Glu-302–Leu-352 lie on the Cytoplasmic side of the membrane. Residues Cys-321, Cys-323, and Cys-324 are each lipidated (S-palmitoyl cysteine). Ser-336, Ser-337, Ser-342, and Ser-349 each carry phosphoserine; by BARK1.

The protein belongs to the G-protein coupled receptor 1 family. As to quaternary structure, interacts with PRAF2. Efficient ligand binding to CCL3/MIP-1alpha and CCL4/MIP-1beta requires sulfation, O-glycosylation and sialic acid modifications. Glycosylation on Ser-6 is required for efficient binding of CCL4. Interacts with GRK2. Interacts with ARRB1 and ARRB2. Interacts with CNIH4. Interacts with S100A4; this interaction stimulates T-lymphocyte chemotaxis. Sulfated on at least 2 of the N-terminal tyrosines. Sulfation is required for efficient binding of the chemokines, CCL3 and CCL4. In terms of processing, palmitoylation in the C-terminal is important for cell surface expression. Post-translationally, phosphorylation on serine residues in the C-terminal is stimulated by binding CC chemokines especially by APO-RANTES. O-glycosylated, but not N-glycosylated. Ser-6 appears to be the major site even if Ser-7 may be also O-glycosylated. Also sialylated glycans present which contribute to chemokine binding. Thr-16 and Ser-17 may also be glycosylated and, if so, with small moieties such as a T-antigen.

The protein localises to the cell membrane. Functionally, receptor for a number of inflammatory CC-chemokines including CCL3/MIP-1-alpha, CCL4/MIP-1-beta and RANTES and subsequently transduces a signal by increasing the intracellular calcium ion level. May play a role in the control of granulocytic lineage proliferation or differentiation. Participates in T-lymphocyte migration to the infection site by acting as a chemotactic receptor. The protein is C-C chemokine receptor type 5 (CCR5) of Macaca fascicularis (Crab-eating macaque).